The sequence spans 559 residues: 5'-AMP-activated protein kinase catalytic subunit alpha-1 (559 aa).

One can recognise a Protein kinase domain in the interval 27 to 279 (YILGDTLGVG…IKDIREHEWF (253 aa)). The residue at position 32 (threonine 32) is a Phosphothreonine. ATP-binding positions include 33–41 (LGVGTFGKV) and lysine 56. Aspartate 150 (proton acceptor) is an active-site residue. Threonine 183 is modified (phosphothreonine; by LKB1 and CaMKK2). A phosphothreonine mark is found at threonine 269 and threonine 355. The AIS stretch occupies residues 302–381 (EALKEVCEKF…PERVPFLVAE (80 aa)). At serine 356 the chain carries Phosphoserine. Serine 360 is subject to Phosphoserine; by ULK1. Threonine 368 bears the Phosphothreonine; by ULK1 mark. Residue threonine 382 is modified to Phosphothreonine. Residues serine 397, serine 467, and serine 486 each carry the phosphoserine modification. Residues 485–505 (KSGTATPQRSGSVSNYRSCQR) show a composition bias toward polar residues. The tract at residues 485 to 536 (KSGTATPQRSGSVSNYRSCQRSDSDAEAQGKSSEVSLTSSVTSLDSSPVDLT) is disordered. Phosphothreonine occurs at positions 488 and 490. Serine 496, serine 508, serine 524, and serine 527 each carry phosphoserine. A compositionally biased stretch (low complexity) spans 516-535 (SSEVSLTSSVTSLDSSPVDL).

Belongs to the protein kinase superfamily. CAMK Ser/Thr protein kinase family. SNF1 subfamily. In terms of assembly, AMPK is a heterotrimer of an alpha catalytic subunit (PRKAA1 or PRKAA2), a beta (PRKAB1 or PRKAB2) and a gamma non-catalytic subunits (PRKAG1, PRKAG2 or PRKAG3). Interacts with FNIP1 and FNIP2. As to quaternary structure, (Microbial infection) Interacts with Dengue type 2 virus non-structural protein 1; this interaction promotes the AMPK/ERK/mTOR signaling pathway to induce autophagy. Mg(2+) is required as a cofactor. Ubiquitinated. Post-translationally, phosphorylated at Thr-183 by STK11/LKB1 in complex with STE20-related adapter-alpha (STRADA) pseudo kinase and CAB39. Also phosphorylated at Thr-183 by CAMKK2; triggered by a rise in intracellular calcium ions, without detectable changes in the AMP/ATP ratio. CAMKK1 can also phosphorylate Thr-183, but at a much lower level. Dephosphorylated by protein phosphatase 2A and 2C (PP2A and PP2C). Phosphorylated by ULK1 and ULK2; leading to negatively regulate AMPK activity and suggesting the existence of a regulatory feedback loop between ULK1, ULK2 and AMPK. Dephosphorylated by PPM1A and PPM1B. In terms of processing, glycosylated; O-GlcNAcylated by OGT, promoting the AMP-activated protein kinase (AMPK) activity.

The protein localises to the cytoplasm. It localises to the nucleus. The catalysed reaction is L-seryl-[protein] + ATP = O-phospho-L-seryl-[protein] + ADP + H(+). The enzyme catalyses L-threonyl-[protein] + ATP = O-phospho-L-threonyl-[protein] + ADP + H(+). It carries out the reaction L-seryl-[acetyl-CoA carboxylase] + ATP = O-phospho-L-seryl-[acetyl-CoA carboxylase] + ADP + H(+). It catalyses the reaction L-seryl-[3-hydroxy-3-methylglutaryl-coenzyme A reductase] + ATP = O-phospho-L-seryl-[3-hydroxy-3-methylglutaryl-coenzyme A reductase] + ADP + H(+). The catalysed reaction is L-seryl-[tau protein] + ATP = O-phospho-L-seryl-[tau protein] + ADP + H(+). The enzyme catalyses L-threonyl-[tau protein] + ATP = O-phospho-L-threonyl-[tau protein] + ADP + H(+). With respect to regulation, activated by phosphorylation on Thr-183. Binding of AMP to non-catalytic gamma subunit (PRKAG1, PRKAG2 or PRKAG3) results in allosteric activation, inducing phosphorylation on Thr-183. AMP-binding to gamma subunit also sustains activity by preventing dephosphorylation of Thr-183. ADP also stimulates Thr-183 phosphorylation, without stimulating already phosphorylated AMPK. ATP promotes dephosphorylation of Thr-183, rendering the enzyme inactive. Under physiological conditions AMPK mainly exists in its inactive form in complex with ATP, which is much more abundant than AMP. AMPK is activated by antihyperglycemic drug metformin, a drug prescribed to patients with type 2 diabetes: in vivo, metformin seems to mainly inhibit liver gluconeogenesis. However, metformin can be used to activate AMPK in muscle and other cells in culture or ex vivo. Selectively inhibited by compound C (6-[4-(2-Piperidin-1-yl-ethoxy)-phenyl)]-3-pyridin-4-yl-pyyrazolo[1,5-a] pyrimidine. Activated by resveratrol, a natural polyphenol present in red wine, and S17834, a synthetic polyphenol. In terms of biological role, catalytic subunit of AMP-activated protein kinase (AMPK), an energy sensor protein kinase that plays a key role in regulating cellular energy metabolism. In response to reduction of intracellular ATP levels, AMPK activates energy-producing pathways and inhibits energy-consuming processes: inhibits protein, carbohydrate and lipid biosynthesis, as well as cell growth and proliferation. AMPK acts via direct phosphorylation of metabolic enzymes, and by longer-term effects via phosphorylation of transcription regulators. Regulates lipid synthesis by phosphorylating and inactivating lipid metabolic enzymes such as ACACA, ACACB, GYS1, HMGCR and LIPE; regulates fatty acid and cholesterol synthesis by phosphorylating acetyl-CoA carboxylase (ACACA and ACACB) and hormone-sensitive lipase (LIPE) enzymes, respectively. Promotes lipolysis of lipid droplets by mediating phosphorylation of isoform 1 of CHKA (CHKalpha2). Regulates insulin-signaling and glycolysis by phosphorylating IRS1, PFKFB2 and PFKFB3. AMPK stimulates glucose uptake in muscle by increasing the translocation of the glucose transporter SLC2A4/GLUT4 to the plasma membrane, possibly by mediating phosphorylation of TBC1D4/AS160. Regulates transcription and chromatin structure by phosphorylating transcription regulators involved in energy metabolism such as CRTC2/TORC2, FOXO3, histone H2B, HDAC5, MEF2C, MLXIPL/ChREBP, EP300, HNF4A, p53/TP53, SREBF1, SREBF2 and PPARGC1A. Acts as a key regulator of glucose homeostasis in liver by phosphorylating CRTC2/TORC2, leading to CRTC2/TORC2 sequestration in the cytoplasm. In response to stress, phosphorylates 'Ser-36' of histone H2B (H2BS36ph), leading to promote transcription. Acts as a key regulator of cell growth and proliferation by phosphorylating FNIP1, TSC2, RPTOR, WDR24 and ATG1/ULK1: in response to nutrient limitation, negatively regulates the mTORC1 complex by phosphorylating RPTOR component of the mTORC1 complex and by phosphorylating and activating TSC2. Also phosphorylates and inhibits GATOR2 subunit WDR24 in response to nutrient limitation, leading to suppress glucose-mediated mTORC1 activation. In response to energetic stress, phosphorylates FNIP1, inactivating the non-canonical mTORC1 signaling, thereby promoting nuclear translocation of TFEB and TFE3, and inducing transcription of lysosomal or autophagy genes. In response to nutrient limitation, promotes autophagy by phosphorylating and activating ATG1/ULK1. In that process, it also activates WDR45/WIPI4. Phosphorylates CASP6, thereby preventing its autoprocessing and subsequent activation. In response to nutrient limitation, phosphorylates transcription factor FOXO3 promoting FOXO3 mitochondrial import. Also acts as a regulator of cellular polarity by remodeling the actin cytoskeleton; probably by indirectly activating myosin. AMPK also acts as a regulator of circadian rhythm by mediating phosphorylation of CRY1, leading to destabilize it. May regulate the Wnt signaling pathway by phosphorylating CTNNB1, leading to stabilize it. Also has tau-protein kinase activity: in response to amyloid beta A4 protein (APP) exposure, activated by CAMKK2, leading to phosphorylation of MAPT/TAU; however the relevance of such data remains unclear in vivo. Also phosphorylates CFTR, EEF2K, KLC1, NOS3 and SLC12A1. Regulates hepatic lipogenesis. Activated via SIRT3, represses sterol regulatory element-binding protein (SREBP) transcriptional activities and ATP-consuming lipogenesis to restore cellular energy balance. Upon stress, regulates mitochondrial fragmentation through phosphorylation of MTFR1L. This chain is 5'-AMP-activated protein kinase catalytic subunit alpha-1, found in Homo sapiens (Human).